The primary structure comprises 222 residues: MGASGRICTVVPVEDAGEAAMLALSSPTGCVELRLDFYPGDPGEALELLATRLHSPARVVVTLRSAGHGGLDRRARGERRAVLARLEDLAPEGWLVDYEVEDLHASSGCSGCIASSHPTTPPTPRRALEEAAVAERLGASAYKLVYPGVEPWEQAAAARLVAEAGGFATSFTLGPGTLASRLTALALGAPLVFGSHPRAPLDGVPQSSEIMELYLRMGLGES.

3-dehydroquinate contacts are provided by residues 32–34 (ELR) and R64. The active-site Proton donor/acceptor is the H117. Catalysis depends on K143, which acts as the Schiff-base intermediate with substrate. 3-dehydroquinate is bound at residue R181.

It belongs to the type-I 3-dehydroquinase family. As to quaternary structure, homodimer.

The enzyme catalyses 3-dehydroquinate = 3-dehydroshikimate + H2O. It functions in the pathway metabolic intermediate biosynthesis; chorismate biosynthesis; chorismate from D-erythrose 4-phosphate and phosphoenolpyruvate: step 3/7. Functionally, involved in the third step of the chorismate pathway, which leads to the biosynthesis of aromatic amino acids. Catalyzes the cis-dehydration of 3-dehydroquinate (DHQ) and introduces the first double bond of the aromatic ring to yield 3-dehydroshikimate. The protein is 3-dehydroquinate dehydratase of Aeropyrum pernix (strain ATCC 700893 / DSM 11879 / JCM 9820 / NBRC 100138 / K1).